Here is a 131-residue protein sequence, read N- to C-terminus: MFSDNSHCPDCGQQWFPSLELGHWLYQTELVENECYQVFLDRINRADYCPECYPDNPANRSLVLPWSFPLEWAPQNLTRWTFEKACHPFLLGPPLVRKKIHDSRVAGFNPALQLILSRTDKTLNKKLGQSK.

The chain is Torsin-1A-interacting protein 2, isoform IFRG15 (Tor1aip2) from Mus musculus (Mouse).